The chain runs to 281 residues: Biotin synthase (281 aa).

In terms of domain architecture, Radical SAM core spans 1–230 (MNQKIFLCSI…AQRIMVAGGR (230 aa)). 3 residues coordinate [4Fe-4S] cluster: cysteine 18, cysteine 22, and cysteine 25. [2Fe-2S] cluster-binding residues include cysteine 62, cysteine 97, and arginine 223.

This sequence belongs to the radical SAM superfamily. Biotin synthase family. In terms of assembly, homodimer. Requires [4Fe-4S] cluster as cofactor. The cofactor is [2Fe-2S] cluster.

It catalyses the reaction (4R,5S)-dethiobiotin + (sulfur carrier)-SH + 2 reduced [2Fe-2S]-[ferredoxin] + 2 S-adenosyl-L-methionine = (sulfur carrier)-H + biotin + 2 5'-deoxyadenosine + 2 L-methionine + 2 oxidized [2Fe-2S]-[ferredoxin]. It participates in cofactor biosynthesis; biotin biosynthesis; biotin from 7,8-diaminononanoate: step 2/2. Its function is as follows. Catalyzes the conversion of dethiobiotin (DTB) to biotin by the insertion of a sulfur atom into dethiobiotin via a radical-based mechanism. This chain is Biotin synthase, found in Sulfurimonas denitrificans (strain ATCC 33889 / DSM 1251) (Thiomicrospira denitrificans (strain ATCC 33889 / DSM 1251)).